Here is a 696-residue protein sequence, read N- to C-terminus: GPI mannosyltransferase 4 (696 aa).

Transmembrane regions (helical) follow at residues 100-120 (WQLELLGTYAYVVFPRLIYTL), 125-142 (NDYCLFRICRLYGLRFEI), 149-169 (SSWILLVFGTRTFSNSLEMAM), 185-205 (NTVVYKKEFLEEKYDKAESIS), 227-247 (AMSTICVAGVFNRPTFLLFGA), and 338-358 (YVHLMVNMPMLFNVLALASLG).

It belongs to the glycosyltransferase 22 family. PIGZ subfamily.

It is found in the endoplasmic reticulum membrane. Its pathway is glycolipid biosynthesis; glycosylphosphatidylinositol-anchor biosynthesis. Mannosyltransferase involved in glycosylphosphatidylinositol-anchor biosynthesis. Transfers a fourth mannose to some trimannosyl-GPIs during GPI precursor assembly. The chain is GPI mannosyltransferase 4 from Drosophila melanogaster (Fruit fly).